Here is a 191-residue protein sequence, read N- to C-terminus: Small ribosomal subunit protein eS7 (191 aa).

It belongs to the eukaryotic ribosomal protein eS7 family.

In Hordeum vulgare (Barley), this protein is Small ribosomal subunit protein eS7 (RPS7).